Here is a 443-residue protein sequence, read N- to C-terminus: MESLASLYKNHIATLQERTRDALARFKLDALLIHSGELFNVFLDDHPYPFKVNPQFKAWVPVTQVPNCWLLVDGVNKPKLWFYLPVDYWHNVEPLPTSFWTEDVEVIALPKADGIGSLLPAARGNIGYIGPVPERALQLGIEASNINPKGVIDYLHYYRSFKTEYELACMREAQKMAVNGHRAAEEAFRSGMSEFDINIAYLTATGHRDTDVPYSNIVALNEHASVLHYTKLDHQAPEEMRSFLLDAGAEYNGYAADLTRTWSAKSDNDYAQLVKDVNDEQLALIATMKAGVSYVDYHLQFHQRIAKLLRKHQIITDMSEEAMVENDLTGPFMPHGIGHPLGLQVHDVAGFMQDDSGTHLAAPAKYPYLRCTRILQPGMVLTIEPGIYFIESLLAPWREGQFSKHFNWQKIEALKPFSGIRIEDNVVIHENNVENMTRDLKLA.

Mn(2+)-binding residues include Asp246, Asp257, His339, Glu384, and Glu423.

It belongs to the peptidase M24B family. Bacterial-type prolidase subfamily. Mn(2+) serves as cofactor.

It catalyses the reaction Xaa-L-Pro dipeptide + H2O = an L-alpha-amino acid + L-proline. Functionally, splits dipeptides with a prolyl residue in the C-terminal position. In Shigella boydii serotype 18 (strain CDC 3083-94 / BS512), this protein is Xaa-Pro dipeptidase.